Here is a 201-residue protein sequence, read N- to C-terminus: Probable nicotinate-nucleotide adenylyltransferase (201 aa).

Belongs to the NadD family.

It carries out the reaction nicotinate beta-D-ribonucleotide + ATP + H(+) = deamido-NAD(+) + diphosphate. Its pathway is cofactor biosynthesis; NAD(+) biosynthesis; deamido-NAD(+) from nicotinate D-ribonucleotide: step 1/1. Catalyzes the reversible adenylation of nicotinate mononucleotide (NaMN) to nicotinic acid adenine dinucleotide (NaAD). This is Probable nicotinate-nucleotide adenylyltransferase from Clostridium botulinum (strain Loch Maree / Type A3).